An 81-amino-acid polypeptide reads, in one-letter code: U-poneritoxin(01)-Om2a (81 aa).

The N-terminal stretch at Met-1–Ala-25 is a signal peptide. Residues Ala-26–Ala-47 constitute a propeptide that is removed on maturation.

The protein belongs to the formicidae venom precursor-01 superfamily. Post-translationally, truncated sequences of this peptide have also been found in the venom. It is possible they have been cleaved in the venom. As to expression, expressed by the venom gland.

It is found in the secreted. In terms of biological role, cationic amphipathic alpha-helical peptide with antimicrobial activities against E.coli (MIC=6.2 uM), S.aureus (MIC=6.2 uM), and S.cerevisiae (MIC=50 uM). Also shows histamine-releasing activity (30.1% at 10 uM) and a weak hemolytic activity (10.4% at 50 uM). The sequence is that of U-poneritoxin(01)-Om2a from Odontomachus monticola (Trap-jaw ant).